We begin with the raw amino-acid sequence, 129 residues long: MAKTATKVRKKVKKNVAEGIAHIHASFNNTIITITDRQGNALSWATSGGAGFRGSRKSTPFAAQVAAEAAGKAAQECGVKNVEVRIKGPGPGRESSVRALNALGMKITSISDVTPVPHNGCRPPKKRRI.

The protein belongs to the universal ribosomal protein uS11 family. In terms of assembly, part of the 30S ribosomal subunit. Interacts with proteins S7 and S18. Binds to IF-3.

Functionally, located on the platform of the 30S subunit, it bridges several disparate RNA helices of the 16S rRNA. Forms part of the Shine-Dalgarno cleft in the 70S ribosome. The polypeptide is Small ribosomal subunit protein uS11 (Dechloromonas aromatica (strain RCB)).